We begin with the raw amino-acid sequence, 480 residues long: uncharacterized protein (480 aa).

The zn(2)-C6 fungal-type DNA-binding region spans 16–46; that stretch reads CDRCRRRKIRCTGSDIPGQPCLACQKAHADC. Low complexity predominate over residues 298–307; sequence SFGASVSPKS. A disordered region spans residues 298 to 325; that stretch reads SFGASVSPKSTPGSNSTGAAVDTNSVHS. A compositionally biased stretch (polar residues) spans 308–325; it reads TPGSNSTGAAVDTNSVHS.

The protein resides in the cytoplasm. Its subcellular location is the nucleus. This is an uncharacterized protein from Schizosaccharomyces pombe (strain 972 / ATCC 24843) (Fission yeast).